A 150-amino-acid chain; its full sequence is Ribonuclease K6 (150 aa).

An N-terminal signal peptide occupies residues 1–23 (MVLCFPLLLLVLVLWGQVCPLHA). H38 (proton acceptor) is an active-site residue. 4 disulfides stabilise this stretch: C46/C104, C60/C114, C78/C129, and C85/C92. N-linked (GlcNAc...) asparagine glycosylation occurs at N55. Substrate is bound by residues 61-65 (KPQNT) and K86. The N-linked (GlcNAc...) asparagine glycan is linked to N100. R105 provides a ligand contact to substrate. Residue H145 is the Proton donor of the active site.

It belongs to the pancreatic ribonuclease family. As to quaternary structure, interacts (via N-terminus) with bacterial lipopolysaccharide (LPS).

It is found in the secreted. The protein resides in the lysosome. The protein localises to the cytoplasmic granule. Functionally, ribonuclease which shows a preference for the pyrimidines uridine and cytosine. Has potent antibacterial activity against a range of Gram-positive and Gram-negative bacteria, including P.aeruginosa, A.baumanii, M.luteus, S.aureus, E.faecalis, E.faecium, S.saprophyticus and E.coli. Causes loss of bacterial membrane integrity, and also promotes agglutination of Gram-negative bacteria. Probably contributes to urinary tract sterility. Bactericidal activity is independent of RNase activity. The protein is Ribonuclease K6 (RNASE6) of Aotus trivirgatus (Three-striped night monkey).